Consider the following 743-residue polypeptide: Zinc transporter ZIP6 (743 aa).

The first 20 residues, 1–20 (MARKLSVILILTFALSVTNP), serve as a signal peptide directing secretion. Topologically, residues 21–313 (LHELKAAAFP…PKTYSLQIAW (293 aa)) are extracellular. Asn-67 carries an N-linked (GlcNAc...) asparagine glycan. Residues 96 to 116 (HEHHSDHEHHSDHEHHSDHEH) show a composition bias toward basic and acidic residues. 2 disordered regions span residues 96 to 174 (HEHH…SASE) and 190 to 245 (LETI…SRNT). The segment covering 117–132 (HSHRNHAASGKNKRKA) has biased composition (basic residues). Basic and acidic residues-rich tracts occupy residues 133–147 (LCPD…KDPR) and 155–167 (HRSE…RNVK). Over residues 206-215 (VSSSTPPSVT) the composition is skewed to polar residues. A compositionally biased stretch (basic and acidic residues) spans 227-237 (KTNESVSEPRK). Asn-229, Asn-254, and Asn-271 each carry an N-linked (GlcNAc...) asparagine glycan. The helical transmembrane segment at 314–334 (VGGFIAISIISFLSLLGVILV) threads the bilayer. The Cytoplasmic segment spans residues 335–343 (PLMNRVFFK). Residues 344-364 (FLLSFLVALAVGTLSGDAFLH) form a helical membrane-spanning segment. Topologically, residues 365-411 (LLPHSHASHHHSHSHEEPAMEMKRGPLFSHLSSQNIEESAYFDSTWK) are extracellular. The chain crosses the membrane as a helical span at residues 412–432 (GLTALGGLYFMFLVEHVLTLI). Residues 433–645 (KQFKDKKKKN…LKAGMTVKQA (213 aa)) lie on the Cytoplasmic side of the membrane. Positions 452-474 (VEIKKQLSKYESQLSTNEEKVDT) form a coiled coil. Ser-459 and Ser-466 each carry phosphoserine. A helical transmembrane segment spans residues 646–666 (VLYNALSAMLAYLGMATGIFI). The Extracellular segment spans residues 667-674 (GHYAENVS). Asn-672 carries an N-linked (GlcNAc...) asparagine glycan. Residues 675-695 (MWIFALTAGLFMYVALVDMVP) traverse the membrane as a helical segment. The Cytoplasmic portion of the chain corresponds to 696 to 712 (EMLHNDASDHGCSRWGY). A helical transmembrane segment spans residues 713–733 (FFLQNAGMLLGFGIMLLISIF). The Extracellular portion of the chain corresponds to 734–743 (EHKIVFRINF).

Belongs to the ZIP transporter (TC 2.A.5) family. As to quaternary structure, interacts with SLC39A10; which triggers cells to undergo EMT and mitosis. Found in a complex with SLC39A6, SLC39A10 and with the 'Ser-727' phosphorylated form of STAT3 throughout mitosis. Found in a complex with SLC39A6, SLC39A10 and with NCAM1; this complex controls NCAM1 phosphorylation and integration into focal adhesion complexes during epithelial-to-mesenchymal transition (EMT). Found in a complex with SLC39A6, SLC39A10 and with GSK3B that controls NCAM1 phosphorylation. Cleaved on the N-terminus before locating to the plasma membrane. In terms of processing, N-glycosylated. Post-translationally, phosphorylated by ZAP70 in response to TCR stimulation leading to its activation.

It localises to the cell membrane. The protein localises to the cell projection. The protein resides in the lamellipodium membrane. Its subcellular location is the membrane raft. It is found in the apical cell membrane. The enzyme catalyses Zn(2+)(in) = Zn(2+)(out). Functionally, zinc-influx transporter which plays a role in zinc homeostasis and in the induction of epithelial-to-mesenchymal transition (EMT). When associated with SLC39A10, the heterodimer formed by SLC39A10 and SLC39A6 mediates cellular zinc uptake to trigger cells to undergo epithelial- to-mesenchymal transition (EMT). The SLC39A10-SLC39A6 heterodimer also controls NCAM1 phosphorylation and its integration into focal adhesion complexes during EMT. Zinc influx inactivates GSK3B, enabling unphosphorylated SNAI1 in the nucleus to down-regulate adherence genes such as CDH1, causing loss of cell adherence. In addition, the SLC39A10-SLC39A6 heterodimer plays an essentiel role in initiating mitosis by importing zinc into cells to initiate a pathway resulting in the onset of mitosis. Participates in the T-cell receptor signaling regulation by mediating cellular zinc uptake into activated lymphocytes. Regulates the zinc influx necessary for proper meiotic progression to metaphase II (MII) that allows the oocyte-to-egg transition. The chain is Zinc transporter ZIP6 from Pongo abelii (Sumatran orangutan).